Consider the following 400-residue polypeptide: Formate-dependent phosphoribosylglycinamide formyltransferase (400 aa).

Residues 22–23 and glutamate 82 contribute to the N(1)-(5-phospho-beta-D-ribosyl)glycinamide site; that span reads EL. ATP is bound by residues arginine 115, lysine 157, 162–167, 197–200, and glutamate 205; these read SSGKGQ and EGFI. The 196-residue stretch at 120–315 folds into the ATP-grasp domain; that stretch reads RLAAETLGLP…EFELHARAIL (196 aa). Glutamate 274 and glutamate 286 together coordinate Mg(2+). Residues aspartate 293, lysine 362, and 369-370 each bind N(1)-(5-phospho-beta-D-ribosyl)glycinamide; that span reads RR.

Belongs to the PurK/PurT family. In terms of assembly, homodimer.

It carries out the reaction N(1)-(5-phospho-beta-D-ribosyl)glycinamide + formate + ATP = N(2)-formyl-N(1)-(5-phospho-beta-D-ribosyl)glycinamide + ADP + phosphate + H(+). It participates in purine metabolism; IMP biosynthesis via de novo pathway; N(2)-formyl-N(1)-(5-phospho-D-ribosyl)glycinamide from N(1)-(5-phospho-D-ribosyl)glycinamide (formate route): step 1/1. Its function is as follows. Involved in the de novo purine biosynthesis. Catalyzes the transfer of formate to 5-phospho-ribosyl-glycinamide (GAR), producing 5-phospho-ribosyl-N-formylglycinamide (FGAR). Formate is provided by PurU via hydrolysis of 10-formyl-tetrahydrofolate. The sequence is that of Formate-dependent phosphoribosylglycinamide formyltransferase from Cupriavidus metallidurans (strain ATCC 43123 / DSM 2839 / NBRC 102507 / CH34) (Ralstonia metallidurans).